Here is a 345-residue protein sequence, read N- to C-terminus: GDSL esterase/lipase At1g23500 (345 aa).

A signal peptide spans 1–24 (MNFSLLSTMLMALSSVCLFFVGYA). Serine 42 functions as the Nucleophile in the catalytic mechanism. The N-linked (GlcNAc...) asparagine glycan is linked to asparagine 103. Active-site residues include aspartate 320 and histidine 323.

Belongs to the 'GDSL' lipolytic enzyme family.

It is found in the secreted. This Arabidopsis thaliana (Mouse-ear cress) protein is GDSL esterase/lipase At1g23500.